We begin with the raw amino-acid sequence, 432 residues long: Enolase (432 aa).

Gln-163 serves as a coordination point for (2R)-2-phosphoglycerate. Catalysis depends on Glu-205, which acts as the Proton donor. Mg(2+) contacts are provided by Asp-242, Glu-285, and Asp-312. Lys-337, Arg-366, Ser-367, and Lys-388 together coordinate (2R)-2-phosphoglycerate. Lys-337 functions as the Proton acceptor in the catalytic mechanism.

It belongs to the enolase family. The cofactor is Mg(2+).

It localises to the cytoplasm. The protein localises to the secreted. The protein resides in the cell surface. It carries out the reaction (2R)-2-phosphoglycerate = phosphoenolpyruvate + H2O. It participates in carbohydrate degradation; glycolysis; pyruvate from D-glyceraldehyde 3-phosphate: step 4/5. Functionally, catalyzes the reversible conversion of 2-phosphoglycerate (2-PG) into phosphoenolpyruvate (PEP). It is essential for the degradation of carbohydrates via glycolysis. In Bifidobacterium longum subsp. infantis (strain ATCC 15697 / DSM 20088 / JCM 1222 / NCTC 11817 / S12), this protein is Enolase.